Reading from the N-terminus, the 122-residue chain is Biogenesis of lysosome-related organelles complex 1 subunit BLS1 (122 aa).

The residue at position 33 (Ser-33) is a Phosphoserine.

Belongs to the BLOC1S1 family. In terms of assembly, component of the biogenesis of lysosome-related organelles complex-1 (BLOC-1) composed of at least BLI1, BLS1, CNL1, KXD1, SNN1 and VAB2.

Its subcellular location is the endosome. Component of the biogenesis of lysosome-related organelles complex-1 (BLOC-1), a complex involved in endosomal cargo sorting. This chain is Biogenesis of lysosome-related organelles complex 1 subunit BLS1 (BLS1), found in Saccharomyces cerevisiae (strain RM11-1a) (Baker's yeast).